The following is a 417-amino-acid chain: MFNTKIEFSKYDPELWKAIDQEKNRQENHIELIASENYTSNYVMHVQGSQLTNKYAEGYPEKRYYGGCKYVDIIEKLAINRAKKLFNADYANVQPHSGSQANFAVYTALLNPGDTILGMKLSHGGHLTHGSSVNFSGKTYNVIGYGVDKKGNIDYQEILTLAKKYKPKMIIGGFSAYSGICNWSKMRDIADEINAYFVVDIAHVAGLIAANLYPNPIDYAHVVTSTTHKTLAGPRGGLILAKNGTNTFYKKINLSVFPGAQGGPLMHVIAAKAIAFKEALEPAFKIYQKQVIKNAQVMVQSFLKKDYQIVSGNTFNHLFLLDLTSKNITGQEADIALGKCNITVNKNTIPNDLRSPFITSGIRIGTPAVTKRGFKENEMLQISDWIVHILNNIKDKNSLLGIKNEVLKLCSKYPVYI.

(6S)-5,6,7,8-tetrahydrofolate contacts are provided by residues leucine 121 and 125–127 (GHL). Residue lysine 229 is modified to N6-(pyridoxal phosphate)lysine. (6S)-5,6,7,8-tetrahydrofolate is bound at residue 355–357 (SPF).

This sequence belongs to the SHMT family. Homodimer. It depends on pyridoxal 5'-phosphate as a cofactor.

It is found in the cytoplasm. The catalysed reaction is (6R)-5,10-methylene-5,6,7,8-tetrahydrofolate + glycine + H2O = (6S)-5,6,7,8-tetrahydrofolate + L-serine. Its pathway is one-carbon metabolism; tetrahydrofolate interconversion. The protein operates within amino-acid biosynthesis; glycine biosynthesis; glycine from L-serine: step 1/1. Its function is as follows. Catalyzes the reversible interconversion of serine and glycine with tetrahydrofolate (THF) serving as the one-carbon carrier. This reaction serves as the major source of one-carbon groups required for the biosynthesis of purines, thymidylate, methionine, and other important biomolecules. Also exhibits THF-independent aldolase activity toward beta-hydroxyamino acids, producing glycine and aldehydes, via a retro-aldol mechanism. This is Serine hydroxymethyltransferase from Buchnera aphidicola subsp. Schizaphis graminum (strain Sg).